The sequence spans 185 residues: Photosystem I assembly protein Ycf4 (185 aa).

Transmembrane regions (helical) follow at residues 20–40 (GNFF…SVGA) and 57–77 (ILFF…LFIS).

It belongs to the Ycf4 family.

Its subcellular location is the plastid. It localises to the chloroplast thylakoid membrane. Functionally, seems to be required for the assembly of the photosystem I complex. This Agrostis stolonifera (Creeping bentgrass) protein is Photosystem I assembly protein Ycf4.